A 1157-amino-acid polypeptide reads, in one-letter code: Probable ATP-dependent RNA helicase DHX37 (1157 aa).

The span at 1-10 shows a compositional bias: basic residues; that stretch reads MGKLRRRYNI. 2 disordered regions span residues 1 to 77 and 116 to 225; these read MGKL…KKEK and TSKL…AAPP. A compositionally biased stretch (pro residues) spans 21-30; sequence SKGPPEPPPV. A compositionally biased stretch (acidic residues) spans 159 to 184; sequence AEEEEEEEEESESELEEESELDEDPA. Composition is skewed to pro residues over residues 198 to 208 and 216 to 225; these read PLPPAPAPSSQ and VPPPPAAAPP. The 168-residue stretch at 262-429 folds into the Helicase ATP-binding domain; that stretch reads MEAVAEHPIV…PRLFAKPPPV (168 aa). 275 to 282 contributes to the ATP binding site; sequence GETGSGKT. Residues 372 to 375 carry the DEAH box motif; sequence DEAH. The Helicase C-terminal domain maps to 459 to 716; the sequence is KVCKIHRMLP…DLILQMKALN (258 aa). Disordered stretches follow at residues 494–523 and 542–584; these read PPSRARPQEKDDDQKDSVEEMRKFKKSRAR and VLPA…QPDA. Residues 499–515 are compositionally biased toward basic and acidic residues; it reads RPQEKDDDQKDSVEEMR. Positions 547–571 are enriched in acidic residues; the sequence is EGDEDREAEVDEEEGALDSDLDLDL.

It belongs to the DEAD box helicase family. DEAH subfamily. In terms of assembly, part of the small subunit (SSU) processome, composed of more than 70 proteins and the RNA chaperone small nucleolar RNA (snoRNA) U3. Interacts with UTP14A. In terms of tissue distribution, expressed in the fallopian tube, ovary, uterus and testis. Also expressed in the brain.

The protein resides in the nucleus. It localises to the nucleolus. The protein localises to the cytoplasm. Its subcellular location is the nucleus membrane. It carries out the reaction ATP + H2O = ADP + phosphate + H(+). In terms of biological role, ATP-binding RNA helicase that plays a role in maturation of the small ribosomal subunit in ribosome biogenesis. Required for the release of the U3 snoRNP from pre-ribosomal particles. Part of the small subunit (SSU) processome, first precursor of the small eukaryotic ribosomal subunit. During the assembly of the SSU processome in the nucleolus, many ribosome biogenesis factors, an RNA chaperone and ribosomal proteins associate with the nascent pre-rRNA and work in concert to generate RNA folding, modifications, rearrangements and cleavage as well as targeted degradation of pre-ribosomal RNA by the RNA exosome. Plays a role in early testis development. Probably also plays a role in brain development. In Homo sapiens (Human), this protein is Probable ATP-dependent RNA helicase DHX37.